The sequence spans 136 residues: MHQTSMGIKMESHTLVFISILLCLYGADGNIVMTQSPKSMSMSVGERVTLTCKASENVVTYVSWYQQKPEQSPKLLIYGASNRYTGVPDRFTGSGSATDFTLTISSVQAEDLADYHCGQGYSYPYTFGGGTKLEIK.

An N-terminal signal peptide occupies residues 1–29 (MHQTSMGIKMESHTLVFISILLCLYGADG). Residues 30 to 52 (NIVMTQSPKSMSMSVGERVTLTC) are framework-1. Positions 53–63 (KASENVVTYVS) are complementarity-determining-1. Residues 64-78 (WYQQKPEQSPKLLIY) are framework-2. The segment at 79-85 (GASNRYT) is complementarity-determining-2. The interval 86-117 (GVPDRFTGSGSATDFTLTISSVQAEDLADYHC) is framework-3. Residues 118 to 126 (GQGYSYPYT) form a complementarity-determining-3 region. Residues 127-136 (FGGGTKLEIK) form a framework-4 region.

The chain is Ig kappa chain V-V region MOPC 21 from Mus musculus (Mouse).